A 103-amino-acid polypeptide reads, in one-letter code: Defensin-like protein 289 (103 aa).

A signal peptide spans Met1–Ala29. Intrachain disulfides connect Cys33-Cys50, Cys39-Cys55, Cys43-Cys57, Cys72-Cys92, Cys78-Cys98, and Cys84-Cys100.

This sequence belongs to the DEFL family.

Its subcellular location is the secreted. This chain is Defensin-like protein 289, found in Arabidopsis thaliana (Mouse-ear cress).